We begin with the raw amino-acid sequence, 425 residues long: Amidase 1 (425 aa).

Position 2 is an N-acetylalanine (Ala2). Active-site charge relay system residues include Lys36 and Ser113. The Acyl-ester intermediate role is filled by Ser137.

Belongs to the amidase family. As to expression, expressed in cotyledons, leaves and flower buds. Lower levels in roots, stems and siliques.

It localises to the cytoplasm. It is found in the nucleus. Its subcellular location is the nucleoplasm. The enzyme catalyses a monocarboxylic acid amide + H2O = a monocarboxylate + NH4(+). The catalysed reaction is indole-3-acetamide + H2O = (indol-3-yl)acetate + NH4(+). It carries out the reaction 2-phenylacetamide + H2O = 2-phenylacetate + NH4(+). It catalyses the reaction L-asparagine + H2O = L-aspartate + NH4(+). The enzyme catalyses 1-naphthaleneacetamide + H2O = 1-naphthaleneacetate + NH4(+). With respect to regulation, inhibited by phenylmethylsulfonyl fluoride (PMSF). Amidase involved in auxin biosynthesis. Converts indole-3-acetamide to indole-3-acetate. Converts phenyl-2-acetamide (PAM) to phenyl-2-acetate. Substrate preference is PAM &gt; IAM. Can also use L-asparagine and 1-naphtalene-acetamide as substrates, but not indole-3-acetonitrile or indole-3-acetyl-L-aspartic acid. The sequence is that of Amidase 1 from Arabidopsis thaliana (Mouse-ear cress).